Reading from the N-terminus, the 253-residue chain is Ubiquinone/menaquinone biosynthesis C-methyltransferase UbiE (253 aa).

S-adenosyl-L-methionine contacts are provided by residues Thr-76, Asp-97, Asn-125–Ala-126, and Ser-142.

It belongs to the class I-like SAM-binding methyltransferase superfamily. MenG/UbiE family.

The catalysed reaction is a 2-demethylmenaquinol + S-adenosyl-L-methionine = a menaquinol + S-adenosyl-L-homocysteine + H(+). It carries out the reaction a 2-methoxy-6-(all-trans-polyprenyl)benzene-1,4-diol + S-adenosyl-L-methionine = a 5-methoxy-2-methyl-3-(all-trans-polyprenyl)benzene-1,4-diol + S-adenosyl-L-homocysteine + H(+). The protein operates within quinol/quinone metabolism; menaquinone biosynthesis; menaquinol from 1,4-dihydroxy-2-naphthoate: step 2/2. Its pathway is cofactor biosynthesis; ubiquinone biosynthesis. Functionally, methyltransferase required for the conversion of demethylmenaquinol (DMKH2) to menaquinol (MKH2) and the conversion of 2-polyprenyl-6-methoxy-1,4-benzoquinol (DDMQH2) to 2-polyprenyl-3-methyl-6-methoxy-1,4-benzoquinol (DMQH2). The chain is Ubiquinone/menaquinone biosynthesis C-methyltransferase UbiE from Xanthomonas campestris pv. campestris (strain ATCC 33913 / DSM 3586 / NCPPB 528 / LMG 568 / P 25).